The following is a 225-amino-acid chain: MMYHIPDVLSADQVAEFTRQLAQAEWVDGRVTVGNQGAAVKQNQQIDTRTPLYARLQAAVLDALRGHPQFFSAALPRTISAPLFNRYGPGETYGFHVDGAVRQNAEAGWMRTDLSATLFLCDPESYEGGELVIEDTYGQHRVKLPAGHLVLYPASSLHCVTPVTHGVRQASFLWIQSMVRDDKQRATLYDLDRTIQSLKARFGDGEEVLSLLNMYHNLLRQWTEV.

The Fe2OG dioxygenase domain occupies 78–177 (TISAPLFNRY…RQASFLWIQS (100 aa)). Positions 96, 98, and 158 each coordinate Fe cation. Residue Arg168 participates in 2-oxoglutarate binding.

The cofactor is Fe(2+). L-ascorbate serves as cofactor.

This is PKHD-type hydroxylase KPK_3192 from Klebsiella pneumoniae (strain 342).